Reading from the N-terminus, the 142-residue chain is Sec-independent protein translocase protein TatB (142 aa).

A helical transmembrane segment spans residues 1-21; that stretch reads MFDIGASELLVLVIVAIVVIG. The segment at 75–142 is disordered; the sequence is RETAAQETAA…PAARPGSQQP (68 aa). A compositionally biased stretch (low complexity) spans 76–94; it reads ETAAQETAAAQGQTPAAAE. Residues 123-133 are compositionally biased toward basic and acidic residues; that stretch reads AKVEARVEEAP.

The protein belongs to the TatB family. In terms of assembly, the Tat system comprises two distinct complexes: a TatABC complex, containing multiple copies of TatA, TatB and TatC subunits, and a separate TatA complex, containing only TatA subunits. Substrates initially bind to the TatABC complex, which probably triggers association of the separate TatA complex to form the active translocon.

It localises to the cell inner membrane. Functionally, part of the twin-arginine translocation (Tat) system that transports large folded proteins containing a characteristic twin-arginine motif in their signal peptide across membranes. Together with TatC, TatB is part of a receptor directly interacting with Tat signal peptides. TatB may form an oligomeric binding site that transiently accommodates folded Tat precursor proteins before their translocation. In Novosphingobium aromaticivorans (strain ATCC 700278 / DSM 12444 / CCUG 56034 / CIP 105152 / NBRC 16084 / F199), this protein is Sec-independent protein translocase protein TatB.